The sequence spans 137 residues: Large ribosomal subunit protein uL16 (137 aa).

This sequence belongs to the universal ribosomal protein uL16 family. As to quaternary structure, part of the 50S ribosomal subunit.

In terms of biological role, binds 23S rRNA and is also seen to make contacts with the A and possibly P site tRNAs. The sequence is that of Large ribosomal subunit protein uL16 from Rhizobium meliloti (strain 1021) (Ensifer meliloti).